The chain runs to 157 residues: 2-C-methyl-D-erythritol 2,4-cyclodiphosphate synthase (157 aa).

A divalent metal cation is bound by residues aspartate 9 and histidine 11. Residues 9–11 and 35–36 each bind 4-CDP-2-C-methyl-D-erythritol 2-phosphate; these read DVH and HS. Histidine 43 contacts a divalent metal cation. 4-CDP-2-C-methyl-D-erythritol 2-phosphate-binding positions include 57-59, 62-66, 101-107, 133-136, phenylalanine 140, and arginine 143; these read DIG, FPDTD, AEKPKMA, and TTTE.

This sequence belongs to the IspF family. As to quaternary structure, homotrimer. Requires a divalent metal cation as cofactor.

The enzyme catalyses 4-CDP-2-C-methyl-D-erythritol 2-phosphate = 2-C-methyl-D-erythritol 2,4-cyclic diphosphate + CMP. It participates in isoprenoid biosynthesis; isopentenyl diphosphate biosynthesis via DXP pathway; isopentenyl diphosphate from 1-deoxy-D-xylulose 5-phosphate: step 4/6. Functionally, involved in the biosynthesis of isopentenyl diphosphate (IPP) and dimethylallyl diphosphate (DMAPP), two major building blocks of isoprenoid compounds. Catalyzes the conversion of 4-diphosphocytidyl-2-C-methyl-D-erythritol 2-phosphate (CDP-ME2P) to 2-C-methyl-D-erythritol 2,4-cyclodiphosphate (ME-CPP) with a corresponding release of cytidine 5-monophosphate (CMP). This is 2-C-methyl-D-erythritol 2,4-cyclodiphosphate synthase from Listeria monocytogenes serovar 1/2a (strain ATCC BAA-679 / EGD-e).